A 255-amino-acid polypeptide reads, in one-letter code: tRNA (guanine-N(7)-)-methyltransferase (255 aa).

Residues methionine 1 to histidine 37 are disordered. S-adenosyl-L-methionine is bound by residues glutamate 80, glutamate 105, aspartate 132, and aspartate 154. Aspartate 154 is an active-site residue. 2 residues coordinate substrate: lysine 158 and aspartate 190.

Belongs to the class I-like SAM-binding methyltransferase superfamily. TrmB family.

It catalyses the reaction guanosine(46) in tRNA + S-adenosyl-L-methionine = N(7)-methylguanosine(46) in tRNA + S-adenosyl-L-homocysteine. The protein operates within tRNA modification; N(7)-methylguanine-tRNA biosynthesis. Its function is as follows. Catalyzes the formation of N(7)-methylguanine at position 46 (m7G46) in tRNA. The protein is tRNA (guanine-N(7)-)-methyltransferase of Nitrobacter hamburgensis (strain DSM 10229 / NCIMB 13809 / X14).